Consider the following 413-residue polypeptide: Tyrosine--tRNA ligase (413 aa).

The 'HIGH' region motif lies at 55–64; that stretch reads PTRPDLHLGH. The short motif at 242–246 is the 'KMSKS' region element; that stretch reads KMSKS. K245 provides a ligand contact to ATP. The 65-residue stretch at 346–410 folds into the S4 RNA-binding domain; the sequence is VKLSYILREC…GKKAFRRLVK (65 aa).

It belongs to the class-I aminoacyl-tRNA synthetase family. TyrS type 2 subfamily. As to quaternary structure, homodimer.

The protein resides in the cytoplasm. The enzyme catalyses tRNA(Tyr) + L-tyrosine + ATP = L-tyrosyl-tRNA(Tyr) + AMP + diphosphate + H(+). In terms of biological role, catalyzes the attachment of tyrosine to tRNA(Tyr) in a two-step reaction: tyrosine is first activated by ATP to form Tyr-AMP and then transferred to the acceptor end of tRNA(Tyr). The sequence is that of Tyrosine--tRNA ligase from Synechococcus sp. (strain JA-2-3B'a(2-13)) (Cyanobacteria bacterium Yellowstone B-Prime).